Here is a 436-residue protein sequence, read N- to C-terminus: Cholecystokinin receptor type A (436 aa).

Residues 1–41 are Extracellular-facing; sequence MDVVDSLLMNGSNITPPCELGLENETLFCLDQPQPSKEWQS. Asparagine 10 and asparagine 24 each carry an N-linked (GlcNAc...) asparagine glycan. Cysteines 18 and 29 form a disulfide. Residues 42–67 traverse the membrane as a helical segment; it reads AVQILLYSFIFLLSVLGNTLVITVLI. At 68-77 the chain is on the cytoplasmic side; that stretch reads RNKRMRTVTN. Residues 78–104 form a helical membrane-spanning segment; sequence IFLLSLAVSDLMLCLFCMPFNLIPNLL. The Extracellular segment spans residues 105–115; it reads KDFIFGSAVCK. An intrachain disulfide couples cysteine 114 to cysteine 196. The chain crosses the membrane as a helical span at residues 116-137; sequence TTTYFMGTSVSVSTFNLVAISL. The Cytoplasmic segment spans residues 138–157; the sequence is ERYGAICRPLQSRVWQTKSH. A helical membrane pass occupies residues 158–178; sequence ALKVIAATWCLSFTIMTPYPI. At 179 to 210 the chain is on the extracellular side; that stretch reads YSNLVPFTKNNNQTANMCRFLLPSDAMQQSWQ. N-linked (GlcNAc...) asparagine glycosylation is present at asparagine 190. A helical transmembrane segment spans residues 211–234; sequence TFLLLILFLIPGVVMVVAYGLISL. The Cytoplasmic portion of the chain corresponds to 235 to 321; sequence ELYQGIKFDA…NLIAKKRVIR (87 aa). Positions 252 to 280 are disordered; it reads EKRLSSGGGGGGGSSSSRYEDSDGCYLQK. The chain crosses the membrane as a helical span at residues 322-342; it reads MLIVIVVLFFLCWMPIFSANA. Residues 343 to 357 lie on the Extracellular side of the membrane; it reads WRAYDTVSAEKHLSG. Residues 358–381 traverse the membrane as a helical segment; the sequence is TPISFILLLSYTSSCVNPIIYCFM. At 382 to 436 the chain is on the cytoplasmic side; sequence NKRFRLGFMATFPCCPNPGPTGVRGEVGEEEDGRTIRASLSRYSYSHMSTSAPPH. Cysteine 395 carries S-palmitoyl cysteine lipidation.

It belongs to the G-protein coupled receptor 1 family.

It localises to the cell membrane. Its function is as follows. Receptor for cholecystokinin. Mediates pancreatic growth and enzyme secretion, smooth muscle contraction of the gall bladder and stomach. Has a 1000-fold higher affinity for CCK rather than for gastrin. It modulates feeding and dopamine-induced behavior in the central and peripheral nervous system. This receptor mediates its action by association with G proteins that activate a phosphatidylinositol-calcium second messenger system. The sequence is that of Cholecystokinin receptor type A (Cckar) from Mus musculus (Mouse).